The primary structure comprises 59 residues: Large ribosomal subunit protein uL30 (59 aa).

The protein belongs to the universal ribosomal protein uL30 family. Part of the 50S ribosomal subunit.

This Solibacter usitatus (strain Ellin6076) protein is Large ribosomal subunit protein uL30.